A 121-amino-acid polypeptide reads, in one-letter code: Large ribosomal subunit protein bL12 (121 aa).

This sequence belongs to the bacterial ribosomal protein bL12 family. Homodimer. Part of the ribosomal stalk of the 50S ribosomal subunit. Forms a multimeric L10(L12)X complex, where L10 forms an elongated spine to which 2 to 4 L12 dimers bind in a sequential fashion. Binds GTP-bound translation factors.

Functionally, forms part of the ribosomal stalk which helps the ribosome interact with GTP-bound translation factors. Is thus essential for accurate translation. This chain is Large ribosomal subunit protein bL12, found in Streptococcus uberis (strain ATCC BAA-854 / 0140J).